Here is a 366-residue protein sequence, read N- to C-terminus: tRNA/tmRNA (uracil-C(5))-methyltransferase (366 aa).

S-adenosyl-L-methionine-binding residues include Q187, Y215, N220, E236, and D297. The Nucleophile role is filled by C322. The Proton acceptor role is filled by E356.

This sequence belongs to the class I-like SAM-binding methyltransferase superfamily. RNA M5U methyltransferase family. TrmA subfamily.

It carries out the reaction uridine(54) in tRNA + S-adenosyl-L-methionine = 5-methyluridine(54) in tRNA + S-adenosyl-L-homocysteine + H(+). The enzyme catalyses uridine(341) in tmRNA + S-adenosyl-L-methionine = 5-methyluridine(341) in tmRNA + S-adenosyl-L-homocysteine + H(+). In terms of biological role, dual-specificity methyltransferase that catalyzes the formation of 5-methyluridine at position 54 (m5U54) in all tRNAs, and that of position 341 (m5U341) in tmRNA (transfer-mRNA). The sequence is that of tRNA/tmRNA (uracil-C(5))-methyltransferase from Marinomonas sp. (strain MWYL1).